The sequence spans 365 residues: Palmitoyltransferase ZDHHC20 (365 aa).

At 1-14 the chain is on the cytoplasmic side; it reads MAPWTLWRCCQRVV. Residues 15–35 traverse the membrane as a helical segment; that stretch reads GWVPVLFITFVVVWSYYAYVV. At 36-53 the chain is on the lumenal side; it reads ELCVFTIFGNEENGKTVV. Residues 54 to 74 form a helical membrane-spanning segment; it reads YLVAFHLFFVMFVWSYWMTIF. The Cytoplasmic portion of the chain corresponds to 75–169; sequence TSPASPSKEF…NNCVGFSNYK (95 aa). Residues 126–176 enclose the DHHC domain; sequence RYCEKCQLIKPDRAHHCSACDSCILKMDHHCPWVNNCVGFSNYKFFLLFLL. Cysteine 128 and cysteine 131 together coordinate Zn(2+). Substrate-binding positions include lysine 135 and 140–143; that span reads HHCS. Histidine 141, cysteine 142, cysteine 145, cysteine 148, and histidine 155 together coordinate Zn(2+). Residue cysteine 156 is the S-palmitoyl cysteine intermediate of the active site. Position 162 (cysteine 162) interacts with Zn(2+). The helical transmembrane segment at 170–190 threads the bilayer; it reads FFLLFLLYSLLYCLFVAATVL. At 191-207 the chain is on the lumenal side; that stretch reads EYFIKFWTNELTDTRAK. A helical membrane pass occupies residues 208 to 231; the sequence is FHVLFLFFVSAMFFISVLSLFSYH. Residues 232 to 365 lie on the Cytoplasmic side of the membrane; it reads CWLVGKNRTT…NNHVTVAIEN (134 aa). Serine 305, serine 330, and serine 339 each carry phosphoserine.

Belongs to the DHHC palmitoyltransferase family. Autopalmitoylated (in vitro).

The protein resides in the golgi apparatus membrane. The protein localises to the cell membrane. It is found in the cytoplasm. Its subcellular location is the perinuclear region. It localises to the endoplasmic reticulum membrane. The protein resides in the endoplasmic reticulum-Golgi intermediate compartment membrane. It catalyses the reaction L-cysteinyl-[protein] + hexadecanoyl-CoA = S-hexadecanoyl-L-cysteinyl-[protein] + CoA. The enzyme catalyses L-cysteinyl-[protein] + tetradecanoyl-CoA = S-tetradecanoyl-L-cysteinyl-[protein] + CoA. The catalysed reaction is L-cysteinyl-[protein] + octadecanoyl-CoA = S-octadecanoyl-L-cysteinyl-[protein] + CoA. In terms of biological role, palmitoyltransferase that could catalyze the addition of palmitate onto various protein substrates. Catalyzes palmitoylation of Cys residues in the cytoplasmic C-terminus of EGFR, and modulates the duration of EGFR signaling by modulating palmitoylation-dependent EGFR internalization and degradation. Has a preference for acyl-CoA with C16 fatty acid chains. Can also utilize acyl-CoA with C14 and C18 fatty acid chains. May palmitoylate CALHM1 subunit of gustatory voltage-gated ion channels and modulate channel gating and kinetics. (Microbial infection) Dominant palmitoyltransferase responsible for lipidation of SARS coronavirus-2/SARS-CoV-2 spike protein. Through a sequential action with ZDHHC9, rapidly and efficiently palmitoylates spike protein following its synthesis in the endoplasmic reticulum (ER). In the infected cell, promotes spike biogenesis by protecting it from premature ER degradation, increases half-life and controls the lipid organization of its immediate membrane environment. Once the virus has formed, spike palmitoylation controls fusion with the target cell. The sequence is that of Palmitoyltransferase ZDHHC20 from Homo sapiens (Human).